We begin with the raw amino-acid sequence, 571 residues long: Proline--tRNA ligase (571 aa).

Belongs to the class-II aminoacyl-tRNA synthetase family. ProS type 1 subfamily. In terms of assembly, homodimer.

It localises to the cytoplasm. It carries out the reaction tRNA(Pro) + L-proline + ATP = L-prolyl-tRNA(Pro) + AMP + diphosphate. Catalyzes the attachment of proline to tRNA(Pro) in a two-step reaction: proline is first activated by ATP to form Pro-AMP and then transferred to the acceptor end of tRNA(Pro). As ProRS can inadvertently accommodate and process non-cognate amino acids such as alanine and cysteine, to avoid such errors it has two additional distinct editing activities against alanine. One activity is designated as 'pretransfer' editing and involves the tRNA(Pro)-independent hydrolysis of activated Ala-AMP. The other activity is designated 'posttransfer' editing and involves deacylation of mischarged Ala-tRNA(Pro). The misacylated Cys-tRNA(Pro) is not edited by ProRS. This Pseudomonas putida (strain ATCC 47054 / DSM 6125 / CFBP 8728 / NCIMB 11950 / KT2440) protein is Proline--tRNA ligase.